A 146-amino-acid polypeptide reads, in one-letter code: Large ribosomal subunit protein bL21 (146 aa).

The segment at 96 to 146 (KKKTRRKMGHRQELTRVMVKSISITNSTPKTSSKTEVKKKSTSPKASNPEN) is disordered.

The protein belongs to the bacterial ribosomal protein bL21 family. Part of the 50S ribosomal subunit. Contacts protein L20.

In terms of biological role, this protein binds to 23S rRNA in the presence of protein L20. This chain is Large ribosomal subunit protein bL21, found in Prochlorococcus marinus subsp. pastoris (strain CCMP1986 / NIES-2087 / MED4).